The chain runs to 612 residues: uncharacterized protein (612 aa).

The tract at residues 213 to 238 (ASAEDGEEAAAGAGKRQVARSGARKR) is disordered. Positions 421–610 (DLACLLLADL…ERLLQLYRRL (190 aa)) constitute a VWFA domain.

The protein localises to the cytoplasm. Component of the anaerobic respiratory chain that transforms nitrate to dinitrogen (denitrification). Function unknown, but essential for the denitrification process. This is an uncharacterized protein from Pseudomonas aeruginosa (strain ATCC 15692 / DSM 22644 / CIP 104116 / JCM 14847 / LMG 12228 / 1C / PRS 101 / PAO1).